The chain runs to 557 residues: Formate--tetrahydrofolate ligase (557 aa).

66 to 73 (TPAGEGKS) contributes to the ATP binding site.

It belongs to the formate--tetrahydrofolate ligase family.

The enzyme catalyses (6S)-5,6,7,8-tetrahydrofolate + formate + ATP = (6R)-10-formyltetrahydrofolate + ADP + phosphate. It functions in the pathway one-carbon metabolism; tetrahydrofolate interconversion. This Clostridium botulinum (strain Kyoto / Type A2) protein is Formate--tetrahydrofolate ligase.